Here is a 543-residue protein sequence, read N- to C-terminus: Acrosin-binding protein (543 aa).

The first 25 residues, 1–25, serve as a signal peptide directing secretion; that stretch reads MGQPAAGSILTLLRVLLLPLGPALA. Positions 26-106 are pro-ACR binding; that stretch reads QDSPSAPTPG…ASWFESFCQF (81 aa). Residues 26-276 constitute a propeptide, removed in mature form; that stretch reads QDSPSAPTPG…DPHSFTARVR (251 aa). Positions 187–239 are disordered; it reads AGQEQAAGHKQEQGQEQHKQDPTQEHKQDDGQEQEEQEEEQEEEGKQEEGQSV. The segment covering 193–216 has biased composition (basic and acidic residues); the sequence is AGHKQEQGQEQHKQDPTQEHKQDD. A compositionally biased stretch (acidic residues) spans 217–232; that stretch reads GQEQEEQEEEQEEEGK. The pro-ACR binding stretch occupies residues 319-427; the sequence is LPHKEALLVL…TQAGTSESGR (109 aa).

In terms of assembly, binds proacrosin (ACR). Does not bind the mature form of ACR. In terms of processing, the N-terminus is blocked. Phosphorylated on Tyr residues in capacitated sperm. Post-translationally, synthesized as a 60-kDa precursor, the 32-kDa mature form is post-translationally produced by the removal of the N-terminal half of the precursor during sperm maturation in the testis and/or epididymis. Specifically expressed in testis.

Its subcellular location is the secreted. It localises to the cytoplasmic vesicle. The protein resides in the secretory vesicle. It is found in the acrosome. Functionally, acrosomal protein that maintains proacrosin (pro-ACR) as an enzymatically inactive zymogen in the acrosome. Involved also in the acrosome formation. The polypeptide is Acrosin-binding protein (ACRBP) (Cavia porcellus (Guinea pig)).